The sequence spans 390 residues: Queuine tRNA-ribosyltransferase (390 aa).

The Proton acceptor role is filled by Asp92. Residues 92–96 (DSGGF), Asp146, Gln195, and Gly222 contribute to the substrate site. Residues 253–259 (GVGTPED) form an RNA binding region. Residue Asp272 is the Nucleophile of the active site. The interval 277 to 281 (TRNAR) is RNA binding; important for wobble base 34 recognition. Cys310, Cys312, Cys315, and His354 together coordinate Zn(2+).

The protein belongs to the queuine tRNA-ribosyltransferase family. In terms of assembly, homodimer. Within each dimer, one monomer is responsible for RNA recognition and catalysis, while the other monomer binds to the replacement base PreQ1. It depends on Zn(2+) as a cofactor.

It carries out the reaction 7-aminomethyl-7-carbaguanine + guanosine(34) in tRNA = 7-aminomethyl-7-carbaguanosine(34) in tRNA + guanine. Its pathway is tRNA modification; tRNA-queuosine biosynthesis. Functionally, catalyzes the base-exchange of a guanine (G) residue with the queuine precursor 7-aminomethyl-7-deazaguanine (PreQ1) at position 34 (anticodon wobble position) in tRNAs with GU(N) anticodons (tRNA-Asp, -Asn, -His and -Tyr). Catalysis occurs through a double-displacement mechanism. The nucleophile active site attacks the C1' of nucleotide 34 to detach the guanine base from the RNA, forming a covalent enzyme-RNA intermediate. The proton acceptor active site deprotonates the incoming PreQ1, allowing a nucleophilic attack on the C1' of the ribose to form the product. After dissociation, two additional enzymatic reactions on the tRNA convert PreQ1 to queuine (Q), resulting in the hypermodified nucleoside queuosine (7-(((4,5-cis-dihydroxy-2-cyclopenten-1-yl)amino)methyl)-7-deazaguanosine). The polypeptide is Queuine tRNA-ribosyltransferase (Delftia acidovorans (strain DSM 14801 / SPH-1)).